Reading from the N-terminus, the 541-residue chain is Apolipoprotein N-acyltransferase (541 aa).

Transmembrane regions (helical) follow at residues 21–41, 54–74, 82–102, 116–136, 157–177, and 189–209; these read LSGF…WYSL, LFVS…SWML, LIYL…SGFS, FLWS…YGIF, FGGF…NMSF, and MLWV…YEYL. The CN hydrolase domain maps to 220–499; the sequence is LRVAVVQPAH…SGVLETSLPL (280 aa). Catalysis depends on Glu264, which acts as the Proton acceptor. Residue Lys349 is part of the active site. Cys404 (nucleophile) is an active-site residue. The helical transmembrane segment at 512 to 532 threads the bilayer; sequence YPMILIAFCAVSYLGGGFLGY.

The protein belongs to the CN hydrolase family. Apolipoprotein N-acyltransferase subfamily.

Its subcellular location is the cell inner membrane. The catalysed reaction is N-terminal S-1,2-diacyl-sn-glyceryl-L-cysteinyl-[lipoprotein] + a glycerophospholipid = N-acyl-S-1,2-diacyl-sn-glyceryl-L-cysteinyl-[lipoprotein] + a 2-acyl-sn-glycero-3-phospholipid + H(+). The protein operates within protein modification; lipoprotein biosynthesis (N-acyl transfer). Its function is as follows. Catalyzes the phospholipid dependent N-acylation of the N-terminal cysteine of apolipoprotein, the last step in lipoprotein maturation. The polypeptide is Apolipoprotein N-acyltransferase (Chlamydia pneumoniae (Chlamydophila pneumoniae)).